Here is a 545-residue protein sequence, read N- to C-terminus: MKTNYIFVTGGVVSSLGKGIAAASLAAILEARGLNVTMMKLDPYINVDPGTMSPIQHGEVFVTDDGAETDLDLGHYERFIRTKMTRRNNFTTGRVYSEVLRKERRGDYLGATIQVIPHITNEIKERIIRGGEGHDVVLVEVGGTVGDIESLPFLEAIRQMAAEVGREHTFYLHLTLVPYLAASGEVKTKPTQHSVKELLSIGIQPDALICRSDRVIPANERAKIALFCNVPEKAVISLKDVDSIYKIPALLKSQGLDDYICKRFSLDCPVANLSEWEQVIYEEANPEGEVTIGMVGKYVELPDAYKSVIEALKHGGFKSRVAVNIKLIDSQDVETRGVEILKGLDAILVPGGFGERGVEGKIMAARYARENKIPYLGICLGMQVAMIEFARNVANMEDANSTEFAPDCKYPVIALITEWRDENGNLEVRTENSDLGGTMRLGAQPCHLSGDSLVRTLYGKNTITERHRHRYEVNNLLLKRIEDAGLRIAGRSVDNKLVEIIENPNHPWFVACQFHPEFTSTPRDGHPLFAGFVKAAFDYQKGLLK.

An amidoligase domain region spans residues 1–266 (MKTNYIFVTG…DDYICKRFSL (266 aa)). Ser14 provides a ligand contact to CTP. Ser14 lines the UTP pocket. ATP contacts are provided by residues 15-20 (SLGKGI) and Asp72. Residues Asp72 and Glu140 each contribute to the Mg(2+) site. CTP-binding positions include 147 to 149 (DIE), 187 to 192 (KTKPTQ), and Lys223. UTP contacts are provided by residues 187 to 192 (KTKPTQ) and Lys223. Position 239 to 241 (239 to 241 (KDV)) interacts with ATP. The Glutamine amidotransferase type-1 domain occupies 291–542 (TIGMVGKYVE…VKAAFDYQKG (252 aa)). Gly352 serves as a coordination point for L-glutamine. The Nucleophile; for glutamine hydrolysis role is filled by Cys379. L-glutamine is bound by residues 380–383 (LGMQ), Glu403, and Arg470. Catalysis depends on residues His515 and Glu517.

This sequence belongs to the CTP synthase family. Homotetramer.

It carries out the reaction UTP + L-glutamine + ATP + H2O = CTP + L-glutamate + ADP + phosphate + 2 H(+). The catalysed reaction is L-glutamine + H2O = L-glutamate + NH4(+). The enzyme catalyses UTP + NH4(+) + ATP = CTP + ADP + phosphate + 2 H(+). It participates in pyrimidine metabolism; CTP biosynthesis via de novo pathway; CTP from UDP: step 2/2. Allosterically activated by GTP, when glutamine is the substrate; GTP has no effect on the reaction when ammonia is the substrate. The allosteric effector GTP functions by stabilizing the protein conformation that binds the tetrahedral intermediate(s) formed during glutamine hydrolysis. Inhibited by the product CTP, via allosteric rather than competitive inhibition. In terms of biological role, catalyzes the ATP-dependent amination of UTP to CTP with either L-glutamine or ammonia as the source of nitrogen. Regulates intracellular CTP levels through interactions with the four ribonucleotide triphosphates. The polypeptide is CTP synthase (Proteus mirabilis (strain HI4320)).